A 307-amino-acid chain; its full sequence is Transcription factor MYB78 (307 aa).

2 HTH myb-type domains span residues 23–79 and 80–130; these read EMDV…RPDV and RRGN…QKHA. DNA-binding regions (H-T-H motif) lie at residues 51-75 and 103-126; these read WNSL…LNYL and WSKI…RTRV.

It localises to the nucleus. This Arabidopsis thaliana (Mouse-ear cress) protein is Transcription factor MYB78.